The following is a 301-amino-acid chain: MTLERDAAANTAKVLSEALPYIRRYVGKTLVIKYGGNAMESEELKTGFARDIVLMKAVGINPVVVHGGGPQIGDLLKRLSIESHFVDGMRVTDAATMDVVEMVLGGQVNKSIVNLINRHGGSAIGLTGKDAGLIRAKKLTVTRQTPEMTQPEIIDIGHVGEVVGINTELLNLLVKGNFIPVIAPIGVGENGESYNINADLVAGKVAEALKAEKLMLLTNIAGLMDKSGTVLTGLSTQQVDDLIADGTIYGGMLPKIRCALEAVQGGVGSSLIIDGRVPNAILLEIFTDTGVGTLISNRKRP.

Residues 68 to 69 (GG), Arg90, and Asn195 contribute to the substrate site.

The protein belongs to the acetylglutamate kinase family. ArgB subfamily.

It is found in the cytoplasm. The enzyme catalyses N-acetyl-L-glutamate + ATP = N-acetyl-L-glutamyl 5-phosphate + ADP. The protein operates within amino-acid biosynthesis; L-arginine biosynthesis; N(2)-acetyl-L-ornithine from L-glutamate: step 2/4. Functionally, catalyzes the ATP-dependent phosphorylation of N-acetyl-L-glutamate. In Pseudomonas fluorescens (strain Pf0-1), this protein is Acetylglutamate kinase.